The chain runs to 31 residues: Fibrinogen beta chain (31 aa).

Positions 1-10 (HYYDDTDEEE) are enriched in acidic residues. The tract at residues 1-31 (HYYDDTDEEERIVSTVDARGHRPLDKKREEA) is disordered. Sulfotyrosine; partial is present on Tyr-2. At Tyr-3 the chain carries Sulfotyrosine. A compositionally biased stretch (basic and acidic residues) spans 18–31 (ARGHRPLDKKREEA).

As to quaternary structure, heterohexamer; disulfide linked. Contains 2 sets of 3 non-identical chains (alpha, beta and gamma). The 2 heterotrimers are in head to head conformation with the N-termini in a small central domain. Conversion of fibrinogen to fibrin is triggered by thrombin, which cleaves fibrinopeptides A and B from alpha and beta chains, and thus exposes the N-terminal polymerization sites responsible for the formation of the soft clot.

The protein resides in the secreted. In terms of biological role, cleaved by the protease thrombin to yield monomers which, together with fibrinogen alpha (FGA) and fibrinogen gamma (FGG), polymerize to form an insoluble fibrin matrix. Fibrin has a major function in hemostasis as one of the primary components of blood clots. In addition, functions during the early stages of wound repair to stabilize the lesion and guide cell migration during re-epithelialization. Was originally thought to be essential for platelet aggregation, based on in vitro studies using anticoagulated blood. However subsequent studies have shown that it is not absolutely required for thrombus formation in vivo. Enhances expression of SELP in activated platelets. Maternal fibrinogen is essential for successful pregnancy. Fibrin deposition is also associated with infection, where it protects against IFNG-mediated hemorrhage. May also facilitate the antibacterial immune response via both innate and T-cell mediated pathways. The protein is Fibrinogen beta chain (FGB) of Canis lupus familiaris (Dog).